The sequence spans 76 residues: UPF0235 protein MMAR_2910 (76 aa).

The protein belongs to the UPF0235 family.

The polypeptide is UPF0235 protein MMAR_2910 (Mycobacterium marinum (strain ATCC BAA-535 / M)).